The following is a 146-amino-acid chain: Transcription initiation factor TFIID subunit 10b (146 aa).

Residues 16-43 (GASSHGQSSGGGGGGDRDRTTPSSHLSD) form a disordered region.

The protein belongs to the TAF10 family. Belongs to the TFIID complex which is composed of TATA binding protein (Tbp) and a number of TBP-associated factors (TAFs). The N-terminus interacts with the histone fold of Taf8. At embryonic stage 9, expression is seen in the mesodermal layer and midgut primordia. The mesoderm-specific expression persists in later stages of development and at its highest level is detected in midgut, hindgut, and differentiating somatic muscle fibers. Coexpressed with Taf10 in the lateral epidermis and anal plate.

It localises to the cytoplasm. The protein localises to the nucleus. Its function is as follows. TFIID is a multimeric protein complex that plays a central role in mediating promoter responses to various activators and repressors. This chain is Transcription initiation factor TFIID subunit 10b, found in Drosophila melanogaster (Fruit fly).